A 195-amino-acid polypeptide reads, in one-letter code: Imidazoleglycerol-phosphate dehydratase (195 aa).

It belongs to the imidazoleglycerol-phosphate dehydratase family.

It is found in the cytoplasm. The catalysed reaction is D-erythro-1-(imidazol-4-yl)glycerol 3-phosphate = 3-(imidazol-4-yl)-2-oxopropyl phosphate + H2O. The protein operates within amino-acid biosynthesis; L-histidine biosynthesis; L-histidine from 5-phospho-alpha-D-ribose 1-diphosphate: step 6/9. The chain is Imidazoleglycerol-phosphate dehydratase from Methylobacterium radiotolerans (strain ATCC 27329 / DSM 1819 / JCM 2831 / NBRC 15690 / NCIMB 10815 / 0-1).